The primary structure comprises 32 residues: U6-ctenitoxin-Pr1a (32 aa).

3 cysteine pairs are disulfide-bonded: C3–C17, C10–C21, and C16–C30.

As to expression, expressed by the venom gland.

It is found in the secreted. This chain is U6-ctenitoxin-Pr1a, found in Phoneutria reidyi (Brazilian Amazonian armed spider).